A 268-amino-acid chain; its full sequence is UPF0328 protein ECU09_2030 (268 aa).

The protein belongs to the UPF0328 family.

This Encephalitozoon cuniculi (strain GB-M1) (Microsporidian parasite) protein is UPF0328 protein ECU09_2030.